Reading from the N-terminus, the 87-residue chain is CRISPR-associated endoribonuclease Cas2 (87 aa).

Asp8 contributes to the Mg(2+) binding site.

The protein belongs to the CRISPR-associated endoribonuclease Cas2 protein family. Homodimer, forms a heterotetramer with a Cas1 homodimer. Mg(2+) is required as a cofactor.

Functionally, CRISPR (clustered regularly interspaced short palindromic repeat), is an adaptive immune system that provides protection against mobile genetic elements (viruses, transposable elements and conjugative plasmids). CRISPR clusters contain sequences complementary to antecedent mobile elements and target invading nucleic acids. CRISPR clusters are transcribed and processed into CRISPR RNA (crRNA). Functions as a ssRNA-specific endoribonuclease. Involved in the integration of spacer DNA into the CRISPR cassette. This chain is CRISPR-associated endoribonuclease Cas2, found in Frankia alni (strain DSM 45986 / CECT 9034 / ACN14a).